The following is an 87-amino-acid chain: Small ribosomal subunit protein bS20 (87 aa).

The disordered stretch occupies residues 1-24; sequence MANTAQARKRARQSVERNKHNSSL.

The protein belongs to the bacterial ribosomal protein bS20 family.

Binds directly to 16S ribosomal RNA. The protein is Small ribosomal subunit protein bS20 of Bordetella petrii (strain ATCC BAA-461 / DSM 12804 / CCUG 43448).